An 81-amino-acid polypeptide reads, in one-letter code: MRKGVHPKNNLVVFKDGSNGAMFLTRSTLNSKETIKYTDGKEYPLITVEITSRSHPFYTGQQKFVDAAGRIDKFNKRYKKS.

Belongs to the bacterial ribosomal protein bL31 family. Type B subfamily. In terms of assembly, part of the 50S ribosomal subunit.

The protein is Large ribosomal subunit protein bL31B of Borrelia garinii subsp. bavariensis (strain ATCC BAA-2496 / DSM 23469 / PBi) (Borreliella bavariensis).